Here is a 167-residue protein sequence, read N- to C-terminus: Putative pre-16S rRNA nuclease (167 aa).

The segment at 1 to 24 (MVLTQHRVPDRPGDPDQDPGRGRR) is disordered. Residues 7-21 (RVPDRPGDPDQDPGR) show a composition bias toward basic and acidic residues.

Belongs to the YqgF nuclease family.

Its subcellular location is the cytoplasm. Functionally, could be a nuclease involved in processing of the 5'-end of pre-16S rRNA. The polypeptide is Putative pre-16S rRNA nuclease (Mycolicibacterium paratuberculosis (strain ATCC BAA-968 / K-10) (Mycobacterium paratuberculosis)).